A 133-amino-acid polypeptide reads, in one-letter code: UPF0102 protein CYA_0680 (133 aa).

This sequence belongs to the UPF0102 family.

This chain is UPF0102 protein CYA_0680, found in Synechococcus sp. (strain JA-3-3Ab) (Cyanobacteria bacterium Yellowstone A-Prime).